The following is a 429-amino-acid chain: Phosphoribosylamine--glycine ligase (429 aa).

An ATP-grasp domain is found at 109–316 (KDFLARHHIP…LVELCLAACD (208 aa)). 135 to 196 (LREKGAPIVV…EEFLDGEEAS (62 aa)) lines the ATP pocket. A disordered region spans residues 209 to 231 (MATSQDHKRVGENDTGLNTGGMG). Residues Glu286 and Asn288 each coordinate Mg(2+).

The protein belongs to the GARS family. It depends on Mg(2+) as a cofactor. Mn(2+) is required as a cofactor.

The enzyme catalyses 5-phospho-beta-D-ribosylamine + glycine + ATP = N(1)-(5-phospho-beta-D-ribosyl)glycinamide + ADP + phosphate + H(+). Its pathway is purine metabolism; IMP biosynthesis via de novo pathway; N(1)-(5-phospho-D-ribosyl)glycinamide from 5-phospho-alpha-D-ribose 1-diphosphate: step 2/2. The sequence is that of Phosphoribosylamine--glycine ligase from Pasteurella multocida (strain Pm70).